The primary structure comprises 396 residues: L-aspartate--glyoxylate aminotransferase (396 aa).

Lys196 is subject to N6-(pyridoxal phosphate)lysine.

Belongs to the class-V pyridoxal-phosphate-dependent aminotransferase family. The cofactor is pyridoxal 5'-phosphate.

It catalyses the reaction oxaloacetate + glycine = glyoxylate + L-aspartate. Functionally, catalyzes the transamination of glyoxylate into glycine using L-aspartate as the preferred amino group donor. Is essential for the growth of P.denitrificans in the presence of glycolate and glyoxylate since it functions in glyoxylate assimilation via the beta-hydroxyaspartate cycle (BHAC). Can catalyze the reverse reaction in vitro, and also use L-serine and L-glutamate as amino group donor, but with much less efficiency than L-aspartate. The sequence is that of L-aspartate--glyoxylate aminotransferase from Paracoccus denitrificans (strain Pd 1222).